We begin with the raw amino-acid sequence, 346 residues long: Holliday junction branch migration complex subunit RuvB (346 aa).

The interval 1–182 is large ATPase domain (RuvB-L); that stretch reads MSEPARLISP…FGIPVRLSFY (182 aa). ATP contacts are provided by residues L21, R22, G63, K66, T67, T68, 129-131, R172, Y182, and R219; that span reads EDF. T67 is a binding site for Mg(2+). The small ATPAse domain (RuvB-S) stretch occupies residues 183 to 253; the sequence is TVEELELIVR…IADEALTRLL (71 aa). Residues 256-346 are head domain (RuvB-H); that stretch reads NVGFDQLDKR…AQFRLFQEDN (91 aa). Residues R292, R311, and R316 each contribute to the DNA site.

This sequence belongs to the RuvB family. As to quaternary structure, homohexamer. Forms an RuvA(8)-RuvB(12)-Holliday junction (HJ) complex. HJ DNA is sandwiched between 2 RuvA tetramers; dsDNA enters through RuvA and exits via RuvB. An RuvB hexamer assembles on each DNA strand where it exits the tetramer. Each RuvB hexamer is contacted by two RuvA subunits (via domain III) on 2 adjacent RuvB subunits; this complex drives branch migration. In the full resolvosome a probable DNA-RuvA(4)-RuvB(12)-RuvC(2) complex forms which resolves the HJ.

The protein localises to the cytoplasm. The enzyme catalyses ATP + H2O = ADP + phosphate + H(+). Its function is as follows. The RuvA-RuvB-RuvC complex processes Holliday junction (HJ) DNA during genetic recombination and DNA repair, while the RuvA-RuvB complex plays an important role in the rescue of blocked DNA replication forks via replication fork reversal (RFR). RuvA specifically binds to HJ cruciform DNA, conferring on it an open structure. The RuvB hexamer acts as an ATP-dependent pump, pulling dsDNA into and through the RuvAB complex. RuvB forms 2 homohexamers on either side of HJ DNA bound by 1 or 2 RuvA tetramers; 4 subunits per hexamer contact DNA at a time. Coordinated motions by a converter formed by DNA-disengaged RuvB subunits stimulates ATP hydrolysis and nucleotide exchange. Immobilization of the converter enables RuvB to convert the ATP-contained energy into a lever motion, pulling 2 nucleotides of DNA out of the RuvA tetramer per ATP hydrolyzed, thus driving DNA branch migration. The RuvB motors rotate together with the DNA substrate, which together with the progressing nucleotide cycle form the mechanistic basis for DNA recombination by continuous HJ branch migration. Branch migration allows RuvC to scan DNA until it finds its consensus sequence, where it cleaves and resolves cruciform DNA. This chain is Holliday junction branch migration complex subunit RuvB, found in Rhizobium leguminosarum bv. trifolii (strain WSM2304).